The following is a 424-amino-acid chain: UDP-N-acetylglucosamine 1-carboxyvinyltransferase (424 aa).

Residue 22–23 coordinates phosphoenolpyruvate; it reads KN. Arg93 is a binding site for UDP-N-acetyl-alpha-D-glucosamine. Cys117 (proton donor) is an active-site residue. A 2-(S-cysteinyl)pyruvic acid O-phosphothioketal modification is found at Cys117. Residues 162-165, Asp307, and Ile329 contribute to the UDP-N-acetyl-alpha-D-glucosamine site; that span reads KVSV.

Belongs to the EPSP synthase family. MurA subfamily.

It is found in the cytoplasm. It carries out the reaction phosphoenolpyruvate + UDP-N-acetyl-alpha-D-glucosamine = UDP-N-acetyl-3-O-(1-carboxyvinyl)-alpha-D-glucosamine + phosphate. It functions in the pathway cell wall biogenesis; peptidoglycan biosynthesis. Functionally, cell wall formation. Adds enolpyruvyl to UDP-N-acetylglucosamine. The sequence is that of UDP-N-acetylglucosamine 1-carboxyvinyltransferase from Actinobacillus pleuropneumoniae serotype 7 (strain AP76).